A 318-amino-acid chain; its full sequence is Zinc chaperone YjiA (318 aa).

Residue 11–19 (GFLGAGKTT) coordinates GTP. The Zn(2+) site is built by Glu37, Glu42, Cys66, Glu74, and His114. Positions 64–67 (CICC) match the CXCC motif motif. A GTP-binding site is contributed by Asp161. Glu167, His170, and His187 together coordinate Zn(2+). Residues 224–315 (ISSIVVELDY…EEEIRAAFAG (92 aa)) form the CobW C-terminal domain.

Belongs to the SIMIBI class G3E GTPase family. ZNG1 subfamily. Monomer in the apo form. Metal binding induces oligomerization. Forms homodimers and higher oligomers.

The enzyme catalyses GTP + H2O = GDP + phosphate + H(+). GTPase activity is inhibited by metal binding. Activity is decreased in the presence of Co(II) or Ni(II), and is completely inhibited in the presence of Zn(II). Its function is as follows. Zinc chaperone that directly transfers zinc cofactor to target proteins, thereby activating them. Zinc is transferred from the CXCC motif in the GTPase domain to the zinc binding site in target proteins in a process requiring GTP hydrolysis. This is Zinc chaperone YjiA (yjiA) from Escherichia coli (strain K12).